A 1010-amino-acid chain; its full sequence is Retinoblastoma-related protein 1 (1010 aa).

Residues 1 to 23 (MEGAAPPASSGSEVTGAGSGKVD) form a disordered region. Residues 419–619 (TPVSTAMTTA…EKGSSMYNSL (201 aa)) are domain A. The segment at 419-861 (TPVSTAMTTA…NEVFIPTVKP (443 aa)) is pocket. The spacer stretch occupies residues 620 to 730 (IVARPTLSAE…PAAGGELCAE (111 aa)). The tract at residues 657-679 (LPPLPFQKQEHSPDKDEVRSPKR) is disordered. Over residues 664–679 (KQEHSPDKDEVRSPKR) the composition is skewed to basic and acidic residues. Positions 731–861 (TGIGVFLSKI…NEVFIPTVKP (131 aa)) are domain B. The tract at residues 868–898 (SGTSPNKKNEEKCAADGPYPESPRLSRFPNL) is disordered.

Belongs to the retinoblastoma protein (RB) family.

The protein resides in the nucleus. Regulator of biological processes that recruits a histone deacetylase to control gene transcription. May play a role in the entry into mitosis, negatively regulating the cell proliferation. Formation of stable complexes with geminiviridae replication-associated proteins may create a cellular environment which favors viral DNA replication. The protein is Retinoblastoma-related protein 1 (RBR1) of Oryza sativa subsp. japonica (Rice).